The following is a 626-amino-acid chain: Mini-chromosome maintenance complex-binding protein (626 aa).

Disordered stretches follow at residues 152 to 216 (STSY…LDLN) and 265 to 287 (PSSL…AHDP). The segment covering 177 to 196 (KQREPHTEPHGNGDSKRQET) has biased composition (basic and acidic residues). Residues 197 to 210 (EAPSSQTTAPSDCS) show a composition bias toward polar residues.

Belongs to the MCMBP family. In terms of assembly, interacts with the mcm complex: associates with the mcm3-7 complex which lacks mcm2, while it does not interact with the mcm complex when mcm2 is present (mcm2-7 complex).

The protein resides in the nucleus. Functionally, associated component of the mcm complex that acts as a regulator of DNA replication. Binds to the MCM complex during late S phase and promotes the disassembly of the mcm complex from chromatin, thereby acting as a key regulator of pre-replication complex (pre-RC) unloading from replicated DNA. Can dissociate the mcm complex without addition of ATP; probably acts by destabilizing interactions of each individual subunits of the mcm complex. Required for sister chromatid cohesion. This is Mini-chromosome maintenance complex-binding protein (mcmbp) from Salmo salar (Atlantic salmon).